A 518-amino-acid polypeptide reads, in one-letter code: UPF0053 inner membrane protein YoaE (518 aa).

The Cytoplasmic portion of the chain corresponds to Met1–Leu13. Residues Leu14–Leu34 form a helical membrane-spanning segment. Residues Ala35–Leu48 lie on the Periplasmic side of the membrane. Residues Leu49–Val69 traverse the membrane as a helical segment. Residues Thr70–Val78 are Cytoplasmic-facing. The chain crosses the membrane as a helical span at residues Met79–Phe99. Topologically, residues Lys100 to Ser124 are periplasmic. A helical membrane pass occupies residues Phe125–Ile145. Topologically, residues Thr146–Gly149 are cytoplasmic. Residues Met150–Leu170 form a helical membrane-spanning segment. Residues Ala171–Thr184 are Periplasmic-facing. Residues Val185–Phe205 traverse the membrane as a helical segment. A topological domain (cytoplasmic) is located at residue Gly206. The chain crosses the membrane as a helical span at residues Phe207–Phe227. Topologically, residues Asn228–Leu354 are periplasmic. 2 consecutive CBS domains span residues Met304 to Val363 and Ala367 to Glu427. The helical transmembrane segment at Val355–Val375 threads the bilayer. The Cytoplasmic portion of the chain corresponds to Pro376 to Glu518.

Belongs to the UPF0053 family.

The protein resides in the cell inner membrane. In Escherichia coli O157:H7, this protein is UPF0053 inner membrane protein YoaE (yoaE).